The sequence spans 228 residues: Probable transcriptional regulatory protein SilR (228 aa).

The 115-residue stretch at 2 to 116 folds into the Response regulatory domain; that stretch reads KILIVEDDIK…ELLARVRTLL (115 aa). The residue at position 51 (Asp51) is a 4-aspartylphosphate. Positions 125 to 225 form a DNA-binding region, ompR/PhoB-type; the sequence is ESQLKVADLS…VRGVGYMLEI (101 aa).

In terms of processing, phosphorylated by SilS.

It is found in the cytoplasm. In terms of biological role, component of the sil cation-efflux system that confers resistance to silver. Probable member of a two-component regulatory system SilS/SilR. This is Probable transcriptional regulatory protein SilR (silR) from Salmonella typhimurium.